The primary structure comprises 247 residues: MHKLVLIRHGESTWNLENRFTGWTDVDLTPTGIEQAKNAGRLLKAEGYDFDLAYTSVLKRATRTLWHCLDEMDRTWLPVEHSWRLNERHYGALQGLNKADMAKQYGDAQVLVWRRSYDTPPPALEPTDPRCERGDIRYAGLAPEQVPLTECLKDTVARVLPYWNEAIAPTIRSGKRVLIAAHGNSIRALVKYLDGISDQDIVGLNIPNGIPLVYELDAELKPLRSYYLGDAEATAKAAAAVAAQGKA.

Substrate contacts are provided by residues 8–15 (RHGESTWN), 21–22 (TG), Arg60, 87–90 (ERHY), Lys98, 114–115 (RR), and 183–184 (GN). Catalysis depends on His9, which acts as the Tele-phosphohistidine intermediate. Glu87 (proton donor/acceptor) is an active-site residue.

It belongs to the phosphoglycerate mutase family. BPG-dependent PGAM subfamily. Homodimer.

The catalysed reaction is (2R)-2-phosphoglycerate = (2R)-3-phosphoglycerate. The protein operates within carbohydrate degradation; glycolysis; pyruvate from D-glyceraldehyde 3-phosphate: step 3/5. Functionally, catalyzes the interconversion of 2-phosphoglycerate and 3-phosphoglycerate. In Acidovorax sp. (strain JS42), this protein is 2,3-bisphosphoglycerate-dependent phosphoglycerate mutase.